A 165-amino-acid polypeptide reads, in one-letter code: Nucleotide-binding protein Ccur92_01650 (165 aa).

Belongs to the YajQ family.

In terms of biological role, nucleotide-binding protein. This Campylobacter curvus (strain 525.92) protein is Nucleotide-binding protein Ccur92_01650.